A 121-amino-acid polypeptide reads, in one-letter code: UPF0295 protein OB0906 (121 aa).

2 consecutive transmembrane segments (helical) span residues 14-34 (IRTFALILVFAGIITMYGGIL) and 43-63 (VIFFILGTLMVILSCAVYVWI).

This sequence belongs to the UPF0295 family.

It localises to the cell membrane. In Oceanobacillus iheyensis (strain DSM 14371 / CIP 107618 / JCM 11309 / KCTC 3954 / HTE831), this protein is UPF0295 protein OB0906.